A 340-amino-acid chain; its full sequence is Protein jhp_1168 (340 aa).

Seems to interact with H.pylori HolB.

In terms of biological role, could be the functional equivalent of DNA polymerase III delta subunit (HolA). This Helicobacter pylori (strain J99 / ATCC 700824) (Campylobacter pylori J99) protein is Protein jhp_1168.